Here is a 237-residue protein sequence, read N- to C-terminus: ATP-dependent dethiobiotin synthetase BioD (237 aa).

Residue 21 to 26 coordinates ATP; it reads GVGKTV. Mg(2+) is bound at residue Thr-25. Residue Lys-48 is part of the active site. Position 52 (Thr-52) interacts with substrate. ATP contacts are provided by residues Asp-56, 117–120, 177–178, and 209–211; these read EALG, SC, and PYL. Mg(2+)-binding residues include Asp-56 and Glu-117.

Belongs to the dethiobiotin synthetase family. As to quaternary structure, homodimer. The cofactor is Mg(2+).

The protein resides in the cytoplasm. The enzyme catalyses (7R,8S)-7,8-diammoniononanoate + CO2 + ATP = (4R,5S)-dethiobiotin + ADP + phosphate + 3 H(+). It catalyses the reaction (7R,8S)-8-amino-7-(carboxyamino)nonanoate + ATP = (4R,5S)-dethiobiotin + ADP + phosphate + H(+). It functions in the pathway cofactor biosynthesis; biotin biosynthesis; biotin from 7,8-diaminononanoate: step 1/2. In terms of biological role, catalyzes a mechanistically unusual reaction, the ATP-dependent insertion of CO2 between the N7 and N8 nitrogen atoms of 7,8-diaminopelargonic acid (DAPA, also called 7,8-diammoniononanoate) to form a ureido ring. This cyanobacterium does not encode bioA (which catalyzes the formation of the precursor for this reaction in the cannonical pathway), instead it encodes bioU, which replaces bioA and also performs the first half of the cannonical BioD reaction. Thus in this bacteria BioD has a different substrate. In Synechocystis replacement of bioU by bioA from E.coli leads to biotin synthesis, showing BioD can use the 'cannonical' 7,8-diammoniononanoate as a substrate. The chain is ATP-dependent dethiobiotin synthetase BioD from Synechocystis sp. (strain ATCC 27184 / PCC 6803 / Kazusa).